A 420-amino-acid chain; its full sequence is Sulfate adenylyltransferase (420 aa).

An N-acetylalanine modification is found at A2.

It belongs to the sulfate adenylyltransferase family. The cofactor is Mg(2+).

It catalyses the reaction sulfate + ATP + H(+) = adenosine 5'-phosphosulfate + diphosphate. Its pathway is sulfur metabolism; hydrogen sulfide biosynthesis; sulfite from sulfate: step 1/3. Inhibited by adenosine 5'-phosphosulfate (APS), but not by 3'phosphoadenosine 5'-phosphosulfate (PAPS). Inhibited by AMP, ADP, CTP, GTP, ITP, UTP and anions other than those in group IV. This is Sulfate adenylyltransferase from Pyropia yezoensis (Susabi-nori).